A 102-amino-acid chain; its full sequence is NADH-quinone oxidoreductase subunit K (102 aa).

3 helical membrane-spanning segments follow: residues 5–25 (LTQYLLVAAILFTIGVAGIIL), 30–50 (IIIILMSVELILLSVNLNLVA), and 62–82 (IFALFILTVAAAEAAIGLAIL).

Belongs to the complex I subunit 4L family. In terms of assembly, NDH-1 is composed of 14 different subunits. Subunits NuoA, H, J, K, L, M, N constitute the membrane sector of the complex.

It localises to the cell inner membrane. The enzyme catalyses a quinone + NADH + 5 H(+)(in) = a quinol + NAD(+) + 4 H(+)(out). Functionally, NDH-1 shuttles electrons from NADH, via FMN and iron-sulfur (Fe-S) centers, to quinones in the respiratory chain. The immediate electron acceptor for the enzyme in this species is believed to be ubiquinone. Couples the redox reaction to proton translocation (for every two electrons transferred, four hydrogen ions are translocated across the cytoplasmic membrane), and thus conserves the redox energy in a proton gradient. In Beijerinckia indica subsp. indica (strain ATCC 9039 / DSM 1715 / NCIMB 8712), this protein is NADH-quinone oxidoreductase subunit K.